The primary structure comprises 661 residues: Peroxisomal acyl-coenzyme A oxidase 1 (661 aa).

Ser26 is subject to Phosphoserine. Lys65 is modified (N6-acetyllysine). N6-succinyllysine is present on residues Lys89 and Lys90. Thr139 is a binding site for FAD. Lys159 bears the N6-succinyllysine mark. FAD is bound at residue Gly178. Residue Lys216 is modified to N6-acetyllysine. An N6-succinyllysine modification is found at Lys241. An N6-acetyllysine mark is found at Lys255, Lys267, and Lys272. Lys349 carries the post-translational modification N6-succinyllysine. Glu421 serves as the catalytic Proton acceptor. Residues Lys437 and Lys446 each carry the N6-acetyllysine; alternate modification. N6-succinyllysine; alternate occurs at positions 437 and 446. Lys500 carries the post-translational modification N6-acetyllysine. At Lys512 the chain carries N6-acetyllysine; alternate. Lys512 carries the N6-succinyllysine; alternate modification. Lys542 carries the post-translational modification N6-succinyllysine. Lys637 is subject to N6-acetyllysine; alternate. The residue at position 637 (Lys637) is an N6-succinyllysine; alternate. Residue Lys643 is modified to N6-succinyllysine. A Phosphoserine modification is found at Ser649. Lys652 bears the N6-acetyllysine mark. Lys655 bears the N6-succinyllysine mark. Residues 659–661 (SKL) carry the Microbody targeting signal motif.

This sequence belongs to the acyl-CoA oxidase family. Homodimer. Interacts with LONP2. FAD is required as a cofactor. As to expression, highest levels of isoform 1 are found in liver and kidney while highest levels of isoform 2 are found in white adipose tissue. Isoform 1 is expressed at higher levels than isoform 2 in liver and kidney while isoform 2 is expressed at higher levels in brain, heart, lung, muscle, white adipose tissue and testis.

The protein resides in the peroxisome. The enzyme catalyses a 2,3-saturated acyl-CoA + O2 = a (2E)-enoyl-CoA + H2O2. The catalysed reaction is hexadecanoyl-CoA + O2 = (2E)-hexadecenoyl-CoA + H2O2. It catalyses the reaction dodecanoyl-CoA + O2 = (2E)-dodecenoyl-CoA + H2O2. It carries out the reaction octanoyl-CoA + O2 = (2E)-octenoyl-CoA + H2O2. The enzyme catalyses decanoyl-CoA + O2 = (2E)-decenoyl-CoA + H2O2. The catalysed reaction is tetradecanoyl-CoA + O2 = (2E)-tetradecenoyl-CoA + H2O2. It catalyses the reaction hexadecanedioyl-CoA + O2 = (2E)-hexadecenedioyl-CoA + H2O2. It carries out the reaction tetracosanoyl-CoA + O2 = (2E)-tetracosenoyl-CoA + H2O2. The enzyme catalyses glutaryl-CoA + O2 = (2E)-glutaconyl-CoA + H2O2. The catalysed reaction is hexanoyl-CoA + O2 = (2E)-hexenoyl-CoA + H2O2. It catalyses the reaction octadecanoyl-CoA + O2 = (2E)-octadecenoyl-CoA + H2O2. It carries out the reaction (5Z,8Z,11Z,14Z,17Z)-eicosapentaenoyl-CoA + O2 = (2E,5Z,8Z,11Z,14Z,17Z)-icosahexaenoyl-CoA + H2O2. The enzyme catalyses (6Z,9Z,12Z,15Z,18Z,21Z)-tetracosahexaenoyl-CoA + O2 = (2E,6Z,9Z,12Z,15Z,18Z,21Z)-tetracosaheptaenoyl-CoA + H2O2. It participates in lipid metabolism; peroxisomal fatty acid beta-oxidation. Its function is as follows. Involved in the initial and rate-limiting step of peroxisomal beta-oxidation of straight-chain saturated and unsaturated very-long-chain fatty acids. Catalyzes the desaturation of fatty acyl-CoAs such as palmitoyl-CoA (hexadecanoyl-CoA) to 2-trans-enoyl-CoAs ((2E)-enoyl-CoAs) such as (2E)-hexadecenoyl-CoA, and donates electrons directly to molecular oxygen (O(2)), thereby producing hydrogen peroxide (H(2)O(2)). In terms of biological role, shows highest activity against medium-chain fatty acyl-CoAs. Shows optimum activity with a chain length of 10 carbons (decanoyl-CoA) in vitro. Functionally, is active against a much broader range of substrates and shows activity towards long-chain acyl-CoAs. This is Peroxisomal acyl-coenzyme A oxidase 1 from Mus musculus (Mouse).